Reading from the N-terminus, the 563-residue chain is Putative cytochrome c oxidase subunit 1-beta (563 aa).

The next 7 membrane-spanning stretches (helical) occupy residues 34–54 (IGHL…VMAL), 76–96 (LFTL…FAGF), 117–137 (MLSY…LAVP), 164–184 (MWIM…VNFL), 208–228 (LFTS…LLVL), 252–272 (LFWF…FGII), and 284–304 (IFGY…SVVV). H80 lines the Fe(II)-heme a pocket. Residues H258 and Y262 each coordinate Cu cation. Residues 258 to 262 (HPEVY) constitute a cross-link (1'-histidyl-3'-tyrosine (His-Tyr)). Cu cation contacts are provided by H307 and H308. 2 helical membrane-spanning segments follow: residues 309-329 (MFAT…LIAV) and 353-373 (MLWA…GVIL). H391 is a heme a3 binding site. Transmembrane regions (helical) follow at residues 392–412 (FHYV…YFWW), 427–447 (IHFW…HWLG), and 470–490 (LSTI…YNVW). H393 is a Fe(II)-heme a binding site. Residues 536–563 (AFDLHHPAHAGEAPQPEPKHEQADREPS) form a disordered region. Positions 552 to 563 (EPKHEQADREPS) are enriched in basic and acidic residues.

This sequence belongs to the heme-copper respiratory oxidase family. As to quaternary structure, associates with subunits II, III and IV to form cytochrome c oxidase. It depends on Cu(2+) as a cofactor. Heme serves as cofactor.

Its subcellular location is the cell membrane. The catalysed reaction is 4 Fe(II)-[cytochrome c] + O2 + 8 H(+)(in) = 4 Fe(III)-[cytochrome c] + 2 H2O + 4 H(+)(out). Its pathway is energy metabolism; oxidative phosphorylation. In terms of biological role, cytochrome c oxidase is the component of the respiratory chain that catalyzes the reduction of oxygen to water. Subunits 1-3 form the functional core of the enzyme complex. CO I is the catalytic subunit of the enzyme. Electrons originating in cytochrome c are transferred via the copper A center of subunit 2 and heme A of subunit 1 to the bimetallic center formed by heme A3 and copper B. The polypeptide is Putative cytochrome c oxidase subunit 1-beta (ctaD2) (Streptomyces avermitilis (strain ATCC 31267 / DSM 46492 / JCM 5070 / NBRC 14893 / NCIMB 12804 / NRRL 8165 / MA-4680)).